The following is a 352-amino-acid chain: MGEFRRYFELDKFLQQDFLYPLIFHEYIYALAHDHVLNRFILVDNFGYDNKSSSLMVKRLITRMSQQNPLLISANDSNXKKWLGHNKNLYSQMISEGFTVIGEIPFSLRLVSSVERKEEIGKSHNLRSIHSLFPFLEDNFVHLNYVSDILIPYPIHLEIVVQTLRSWLKDASSLHLLRFLLYEYQNWNSLIIPTPKKPSSIVSKRNQRLFLFLYNSYVCEYESIFFFLCNQSSHLPSTSSETLFERTFFHGKIKALVEVGSNDFPPVRWLFKDPFMHYVRYQGKSILASKSTPLLMDKWKYYLVNFWQCHLYVWSKPVRIHMNQLSNHSFGFLGYLSSVRLNPSVVRSQMLE.

This sequence belongs to the intron maturase 2 family. MatK subfamily.

Its subcellular location is the plastid. It localises to the chloroplast. Usually encoded in the trnK tRNA gene intron. Probably assists in splicing its own and other chloroplast group II introns. The sequence is that of Maturase K (matK) from Saxifraga cernua (Nodding saxifrage).